The following is a 148-amino-acid chain: Large ribosomal subunit protein uL15B (148 aa).

Composition is skewed to basic residues over residues 1-13 (MPTH…KLRG) and 21-31 (RIGKHRKHPGG). A disordered region spans residues 1–38 (MPTHTSKTRKLRGHVSAGHGRIGKHRKHPGGRGKAGGL). At Tyr108 the chain carries Phosphotyrosine.

Belongs to the universal ribosomal protein uL15 family. As to quaternary structure, component of the large ribosomal subunit (LSU). Mature yeast ribosomes consist of a small (40S) and a large (60S) subunit. The 40S small subunit contains 1 molecule of ribosomal RNA (18S rRNA) and at least 33 different proteins. The large 60S subunit contains 3 rRNA molecules (25S, 5.8S and 5S rRNA) and at least 46 different proteins.

The protein localises to the cytoplasm. Its subcellular location is the nucleus. The protein resides in the nucleolus. Functionally, component of the ribosome, a large ribonucleoprotein complex responsible for the synthesis of proteins in the cell. The small ribosomal subunit (SSU) binds messenger RNAs (mRNAs) and translates the encoded message by selecting cognate aminoacyl-transfer RNA (tRNA) molecules. The large subunit (LSU) contains the ribosomal catalytic site termed the peptidyl transferase center (PTC), which catalyzes the formation of peptide bonds, thereby polymerizing the amino acids delivered by tRNAs into a polypeptide chain. The nascent polypeptides leave the ribosome through a tunnel in the LSU and interact with protein factors that function in enzymatic processing, targeting, and the membrane insertion of nascent chains at the exit of the ribosomal tunnel. This is Large ribosomal subunit protein uL15B (rpl2801) from Schizosaccharomyces pombe (strain 972 / ATCC 24843) (Fission yeast).